Here is a 230-residue protein sequence, read N- to C-terminus: Secretory carrier-associated membrane protein 4 (230 aa).

Topologically, residues 1-39 (MAGKENNFPPLPPFLPLKPCFYQDFSDEIPVEHQVLVKR) are cytoplasmic. The next 4 helical transmembrane spans lie at 40–60 (IYRL…ACLA), 61–81 (WWIA…LVLF), 106–126 (MTFF…AIGF), and 149–169 (VVML…AVTI). Topologically, residues 170–230 (VKVHRIYRGA…SYSSSGGHWP (61 aa)) are cytoplasmic. Position 194 is a phosphothreonine (Thr194).

It belongs to the SCAMP family.

It localises to the membrane. Probably involved in membrane protein trafficking. The sequence is that of Secretory carrier-associated membrane protein 4 (Scamp4) from Mus musculus (Mouse).